A 136-amino-acid polypeptide reads, in one-letter code: MSARGKARNRALDVLFEAEQRSLSAFDVLRSRREKTDQIVNPYTLEIVEGVVSHQAAIDEFLETYSQGWTLERMPSVDRIILRIGTWELLYNDDVPDGVAVSEAVALAKTLSTDESPSFINGLLGRLQQLKPSLLA.

Belongs to the NusB family.

In terms of biological role, involved in transcription antitermination. Required for transcription of ribosomal RNA (rRNA) genes. Binds specifically to the boxA antiterminator sequence of the ribosomal RNA (rrn) operons. The sequence is that of Transcription antitermination protein NusB from Arthrobacter sp. (strain FB24).